A 261-amino-acid polypeptide reads, in one-letter code: Fructoselysine 6-kinase (261 aa).

It belongs to the carbohydrate kinase PfkB family. In terms of assembly, monomer.

The enzyme catalyses N(6)-(D-fructosyl)-L-lysine + ATP = N(6)-(6-phospho-D-fructosyl)-L-lysine + ADP + H(+). It functions in the pathway carbohydrate metabolism; fructoselysine degradation; D-glucose 6-phosphate and lysine from fructoselysine: step 1/2. Catalyzes the ATP-dependent phosphorylation of fructoselysine to fructoselysine 6-phosphate. May function in a fructoselysine degradation pathway that allows S.flexneri to grow on fructoselysine or psicoselysine. In Shigella flexneri, this protein is Fructoselysine 6-kinase (frlD).